The following is a 2351-amino-acid chain: Protein FAM186A (2351 aa).

Residues 296 to 340 (EAEKELSLKIIRDLSNENEMLQQKLQDAEEKCEQLIRSKIVIEQL) adopt a coiled-coil conformation. 8 disordered regions span residues 412–460 (ERTP…SWKR), 470–489 (ETSG…SEAK), 505–538 (EMKS…GKSG), 593–667 (QFDD…SEQS), 809–838 (STVQ…SGMS), 868–976 (LQMK…RGLE), 1805–1837 (GGQS…PGQP), and 1888–1907 (FQPP…STPG). Residues 433 to 446 (DSTKDNVSLKKGDF) show a composition bias toward basic and acidic residues. Over residues 472–484 (SGPNLSDNKSGQK) the composition is skewed to polar residues. The segment covering 506–520 (MKSFSEDKSKSPTEA) has biased composition (basic and acidic residues). The segment covering 527–538 (LTETKSQGGKSG) has biased composition (polar residues). Positions 603 to 612 (GKIKGKKHHI) are enriched in basic residues. Composition is skewed to basic and acidic residues over residues 619–632 (SKEE…ELTK) and 812–823 (QKDHKEKEKQRQ). Residues 812–860 (QKDHKEKEKQRQEQYLQEGQEQMSGMSLKQQLLGERNLLKEHYEKISEN) are a coiled coil. The span at 824–838 (EQYLQEGQEQMSGMS) shows a compositional bias: polar residues. Basic and acidic residues-rich tracts occupy residues 901–912 (AEQEEKQKQRGQ), 939–955 (LEKE…EAKH), and 964–976 (KGKE…RGLE). Pro residues predominate over residues 1816–1835 (PQAPPSPGQLPISRAPPTPG). The segment covering 1894–1907 (AEQSPYLQAPSTPG) has biased composition (polar residues).

The protein belongs to the FAM186 family.

The protein is Protein FAM186A (FAM186A) of Homo sapiens (Human).